A 202-amino-acid chain; its full sequence is Pectinesterase inhibitor 11 (202 aa).

The first 21 residues, 1–21 (MAKQIFYTLFLFLLSTAILTA), serve as a signal peptide directing secretion. Residues C43 and C52 are joined by a disulfide bond. N76 carries an N-linked (GlcNAc...) asparagine glycan. A disulfide bridge connects residues C109 and C160.

Belongs to the PMEI family.

The protein resides in the secreted. It localises to the extracellular space. Its subcellular location is the apoplast. Functionally, pectin methylesterase (PME) inhibitor involved in the maintenance of cell wall integrity in response to necrotrophic pathogens. Modulates PME activity and pectin methylesterification during infection by Botrytis cinerea and contributes to resistance against the pathogen. This is Pectinesterase inhibitor 11 from Arabidopsis thaliana (Mouse-ear cress).